Reading from the N-terminus, the 61-residue chain is Large ribosomal subunit protein bL28 (61 aa).

The protein belongs to the bacterial ribosomal protein bL28 family.

The protein is Large ribosomal subunit protein bL28 of Lactobacillus gasseri (strain ATCC 33323 / DSM 20243 / BCRC 14619 / CIP 102991 / JCM 1131 / KCTC 3163 / NCIMB 11718 / NCTC 13722 / AM63).